The following is a 72-amino-acid chain: IIEPSLKALASKFNCDKMICRKCYVRCPRRTPQRTCRVLTWIPQARLPPRATNCRKRKCGHTNHVRPKKKLK.

This sequence belongs to the eukaryotic ribosomal protein eL40 family.

The chain is Large ribosomal subunit protein eL40 from Nicotiana tabacum (Common tobacco).